Consider the following 468-residue polypeptide: Acetyl-CoA decarbonylase/synthase complex subunit gamma 2 (468 aa).

Residues 1–60 (MKINSPLEAYKYLPQTNCGECGEATCMAFASKLIDRSGKPTQCPPLVKEKKFAKKLAELE) enclose the 4Fe-4S domain. Residues C18, C21, C26, and C43 each coordinate [4Fe-4S] cluster.

In terms of assembly, heterodimer of delta and gamma chains. The ACDS complex is made up of alpha, epsilon, beta, gamma and delta chains with a probable stoichiometry of (alpha(2)epsilon(2))(4)-beta(8)-(gamma(1)delta(1))(8). Corrinoid serves as cofactor. Requires [4Fe-4S] cluster as cofactor.

It catalyses the reaction 5,6,7,8-tetrahydrosarcinapterin + methyl-Co(III)-[corrinoid Fe-S protein] = 5-methyltetrahydrosarcinapterin + Co(I)-[corrinoid Fe-S protein] + H(+). It participates in one-carbon metabolism; methanogenesis from acetate. Functionally, part of a complex that catalyzes the reversible cleavage of acetyl-CoA, allowing growth on acetate as sole source of carbon and energy. The sequence is that of Acetyl-CoA decarbonylase/synthase complex subunit gamma 2 from Methanosarcina thermophila.